An 84-amino-acid polypeptide reads, in one-letter code: RNA-binding protein Hfq (84 aa).

The Sm domain maps to 11 to 71 (DTFLNFVRKN…ISTIMPGAPI (61 aa)).

Belongs to the Hfq family. As to quaternary structure, homohexamer.

Its function is as follows. RNA chaperone that binds small regulatory RNA (sRNAs) and mRNAs to facilitate mRNA translational regulation in response to envelope stress, environmental stress and changes in metabolite concentrations. Also binds with high specificity to tRNAs. The sequence is that of RNA-binding protein Hfq from Beijerinckia indica subsp. indica (strain ATCC 9039 / DSM 1715 / NCIMB 8712).